The sequence spans 247 residues: Protein IRON-RELATED TRANSCRIPTION FACTOR 2 (247 aa).

A Nuclear localization signal motif is present at residues 68-75 (HRKLSHNA). Residues 68-81 (HRKLSHNAYERDRR) form a basic motif region. Residues 68-119 (HRKLSHNAYERDRRKQLNELYSSLRALLPDADHTKLSIPTTVSRVLKYIPEL) enclose the bHLH domain. Positions 82-119 (KQLNELYSSLRALLPDADHTKLSIPTTVSRVLKYIPEL) are helix-loop-helix motif.

Belongs to the bHLH protein family. Forms homodimers. Interacts with BHLH156 in the nucleus. In terms of tissue distribution, expressed constitutively at low levels in the roots. Also observed in flowers, developing seeds, embryos and vascular bundles.

It localises to the nucleus. Its subcellular location is the cytoplasm. Its function is as follows. Transcription activator that binds to the DNA motif 5'-CACGTGG-3' in the promoter of iron (Fe) deficiency-inducible genes as well as of genes involved in iron homeostasis, thus contributing to basal tolerance to iron deficiency, iron uptake from soil and iron transport, particularly during seed maturation and germination. Promotes the accumulation of mugineic acid family phytosiderophores (MAs). Required for ethylene-mediated signaling during iron deficiency responses. Improves growth and yield, especially in calcareous soil with low iron availability. Promotes iron concentration in shoots and grain. This Oryza sativa subsp. japonica (Rice) protein is Protein IRON-RELATED TRANSCRIPTION FACTOR 2.